Consider the following 508-residue polypeptide: Photosystem II CP47 reaction center protein (508 aa).

6 helical membrane passes run 21–36 (SVHI…WAGS), 101–115 (IVFS…IWHW), 140–156 (GIHL…FGAF), 203–218 (IAAG…FHLS), 237–252 (VLSS…AFVV), and 457–472 (TFAL…HGAR).

Belongs to the PsbB/PsbC family. PsbB subfamily. In terms of assembly, PSII is composed of 1 copy each of membrane proteins PsbA, PsbB, PsbC, PsbD, PsbE, PsbF, PsbH, PsbI, PsbJ, PsbK, PsbL, PsbM, PsbT, PsbX, PsbY, PsbZ, Psb30/Ycf12, at least 3 peripheral proteins of the oxygen-evolving complex and a large number of cofactors. It forms dimeric complexes. Requires Binds multiple chlorophylls. PSII binds additional chlorophylls, carotenoids and specific lipids. as cofactor.

The protein resides in the plastid. The protein localises to the chloroplast thylakoid membrane. Its function is as follows. One of the components of the core complex of photosystem II (PSII). It binds chlorophyll and helps catalyze the primary light-induced photochemical processes of PSII. PSII is a light-driven water:plastoquinone oxidoreductase, using light energy to abstract electrons from H(2)O, generating O(2) and a proton gradient subsequently used for ATP formation. This Calycanthus floridus var. glaucus (Eastern sweetshrub) protein is Photosystem II CP47 reaction center protein.